The chain runs to 215 residues: uncharacterized protein (215 aa).

A run of 5 helical transmembrane segments spans residues 9–29, 50–70, 77–97, 107–127, and 160–180; these read WTFY…TIEG, LTVG…TSLF, IGAL…NFIL, IIVF…YVSA, and ILFA…LTAI.

The protein resides in the cell membrane. This is an uncharacterized protein from Bacillus subtilis (strain 168).